Reading from the N-terminus, the 49-residue chain is Large ribosomal subunit protein bL33A (49 aa).

It belongs to the bacterial ribosomal protein bL33 family.

The polypeptide is Large ribosomal subunit protein bL33A (Lactobacillus johnsonii (strain CNCM I-12250 / La1 / NCC 533)).